The chain runs to 80 residues: Protein FAM229B (80 aa).

A disordered region spans residues 1-44; that stretch reads MPFQFGTQPRRFPVEGGDSSIELEPGLSSSAACNGKEMSPTRQL.

Belongs to the FAM229 family.

In Homo sapiens (Human), this protein is Protein FAM229B (FAM229B).